Here is a 302-residue protein sequence, read N- to C-terminus: Citrate lyase subunit beta (302 aa).

Substrate is bound by residues Arg-69 and Glu-132. Residues Glu-132 and Asp-159 each coordinate Mg(2+).

Belongs to the HpcH/HpaI aldolase family. Citrate lyase beta subunit subfamily. In terms of assembly, oligomer with a subunit composition of (alpha,beta,gamma)6. Mg(2+) serves as cofactor.

The protein resides in the cytoplasm. It carries out the reaction citrate = oxaloacetate + acetate. It catalyses the reaction (3S)-citryl-CoA = oxaloacetate + acetyl-CoA. Functionally, represents a citryl-ACP lyase. The chain is Citrate lyase subunit beta (citE) from Leuconostoc mesenteroides subsp. cremoris.